We begin with the raw amino-acid sequence, 207 residues long: Large ribosomal subunit protein uL4 (207 aa).

The tract at residues 50-76 (AVKNRSAVSGGGRKPWKQKGTGRARQG) is disordered.

The protein belongs to the universal ribosomal protein uL4 family. Part of the 50S ribosomal subunit.

One of the primary rRNA binding proteins, this protein initially binds near the 5'-end of the 23S rRNA. It is important during the early stages of 50S assembly. It makes multiple contacts with different domains of the 23S rRNA in the assembled 50S subunit and ribosome. Functionally, forms part of the polypeptide exit tunnel. In Staphylococcus aureus (strain MRSA252), this protein is Large ribosomal subunit protein uL4.